A 619-amino-acid chain; its full sequence is CLPTM1-like membrane protein cnrB (619 aa).

The interval 1 to 21 (MNNQGGAVAANGQRPQAQQQQ) is disordered. The segment covering 9 to 21 (AANGQRPQAQQQQ) has biased composition (low complexity). The next 6 membrane-spanning stretches (helical) occupy residues 26 to 46 (IMGIISTLIRFMAIYYIASFA), 324 to 344 (WILGLTLIVSVLHTIFEFLAF), 360 to 380 (LSVKTITLNCVCMGIIFLYLL), 384 to 404 (TSYMILASSGFGFLVEFWKLG), 445 to 465 (YLSWLLFPLVIGTSIYSLYYH), and 474 to 496 (VVSSLVRTVYTFEFIMMTPQLFI). Positions 566-619 (SEEAEEVQQQDKKEIKEKVEEREEEKQEEEEEEKEKEEESTSSSKVTKRKTKKV) are disordered. Residues 574 to 590 (QQDKKEIKEKVEEREEE) show a composition bias toward basic and acidic residues. A compositionally biased stretch (acidic residues) spans 591–605 (KQEEEEEEKEKEEES).

This sequence belongs to the CLPTM1 family.

The protein resides in the membrane. This Dictyostelium discoideum (Social amoeba) protein is CLPTM1-like membrane protein cnrB (cnrB).